Reading from the N-terminus, the 320-residue chain is Small ribosomal subunit protein uS2 (320 aa).

Residues 254–320 form a disordered region; that stretch reads GDAAKAALPV…APATTGPVSE (67 aa). The span at 272–282 shows a compositional bias: basic and acidic residues; that stretch reads VSAKNEAKSDD. A compositionally biased stretch (low complexity) spans 308-320; it reads AEAAPATTGPVSE.

Belongs to the universal ribosomal protein uS2 family.

This is Small ribosomal subunit protein uS2 from Clavibacter sepedonicus (Clavibacter michiganensis subsp. sepedonicus).